The primary structure comprises 1302 residues: DNA-directed RNA polymerase subunit beta (1302 aa).

This sequence belongs to the RNA polymerase beta chain family. In terms of assembly, the RNAP catalytic core consists of 2 alpha, 1 beta, 1 beta' and 1 omega subunit. When a sigma factor is associated with the core the holoenzyme is formed, which can initiate transcription.

It carries out the reaction RNA(n) + a ribonucleoside 5'-triphosphate = RNA(n+1) + diphosphate. DNA-dependent RNA polymerase catalyzes the transcription of DNA into RNA using the four ribonucleoside triphosphates as substrates. In Spiroplasma citri, this protein is DNA-directed RNA polymerase subunit beta.